The sequence spans 492 residues: Glutamyl-tRNA(Gln) amidotransferase subunit A (492 aa).

Residues K81 and S156 each act as charge relay system in the active site. S180 (acyl-ester intermediate) is an active-site residue.

The protein belongs to the amidase family. GatA subfamily. As to quaternary structure, heterotrimer of A, B and C subunits.

It carries out the reaction L-glutamyl-tRNA(Gln) + L-glutamine + ATP + H2O = L-glutaminyl-tRNA(Gln) + L-glutamate + ADP + phosphate + H(+). Its function is as follows. Allows the formation of correctly charged Gln-tRNA(Gln) through the transamidation of misacylated Glu-tRNA(Gln) in organisms which lack glutaminyl-tRNA synthetase. The reaction takes place in the presence of glutamine and ATP through an activated gamma-phospho-Glu-tRNA(Gln). The protein is Glutamyl-tRNA(Gln) amidotransferase subunit A of Rhodococcus erythropolis (strain PR4 / NBRC 100887).